The sequence spans 470 residues: ATP synthase subunit beta (470 aa).

Residue 148-155 (GGAGVGKT) coordinates ATP.

This sequence belongs to the ATPase alpha/beta chains family. F-type ATPases have 2 components, CF(1) - the catalytic core - and CF(0) - the membrane proton channel. CF(1) has five subunits: alpha(3), beta(3), gamma(1), delta(1), epsilon(1). CF(0) has three main subunits: a(1), b(2) and c(9-12). The alpha and beta chains form an alternating ring which encloses part of the gamma chain. CF(1) is attached to CF(0) by a central stalk formed by the gamma and epsilon chains, while a peripheral stalk is formed by the delta and b chains.

It localises to the cell inner membrane. It catalyses the reaction ATP + H2O + 4 H(+)(in) = ADP + phosphate + 5 H(+)(out). In terms of biological role, produces ATP from ADP in the presence of a proton gradient across the membrane. The catalytic sites are hosted primarily by the beta subunits. This is ATP synthase subunit beta from Teredinibacter turnerae (strain ATCC 39867 / T7901).